Reading from the N-terminus, the 157-residue chain is Mini-ribonuclease 3 (157 aa).

D18 is a catalytic residue. The interval 126 to 157 (EEDEGKGKGETAKEEESITDALSPAEQSEIDC) is disordered. A compositionally biased stretch (basic and acidic residues) spans 130-141 (GKGKGETAKEEE).

Belongs to the MrnC RNase family. In terms of assembly, homodimer. Requires Mg(2+) as cofactor.

The protein localises to the cytoplasm. In terms of biological role, involved in correct processing of both the 5' and 3' ends of 23S rRNA precursor. Processes 30S rRNA precursor transcript even in absence of ribonuclease 3 (Rnc); Rnc processes 30S rRNA into smaller rRNA precursors. This chain is Mini-ribonuclease 3, found in Desulfitobacterium hafniense (strain Y51).